Consider the following 334-residue polypeptide: Ribosomal RNA large subunit methyltransferase F (334 aa).

The segment at 1-25 (MPRPSSPRPDAERKSASPLHPRNRH) is disordered.

Belongs to the methyltransferase superfamily. METTL16/RlmF family.

The protein localises to the cytoplasm. It carries out the reaction adenosine(1618) in 23S rRNA + S-adenosyl-L-methionine = N(6)-methyladenosine(1618) in 23S rRNA + S-adenosyl-L-homocysteine + H(+). Specifically methylates the adenine in position 1618 of 23S rRNA. The polypeptide is Ribosomal RNA large subunit methyltransferase F (Pseudomonas paraeruginosa (strain DSM 24068 / PA7) (Pseudomonas aeruginosa (strain PA7))).